The following is a 132-amino-acid chain: Small ribosomal subunit protein uS8c (132 aa).

It belongs to the universal ribosomal protein uS8 family. Part of the 30S ribosomal subunit.

The protein resides in the plastid. The protein localises to the chloroplast. In terms of biological role, one of the primary rRNA binding proteins, it binds directly to 16S rRNA central domain where it helps coordinate assembly of the platform of the 30S subunit. This is Small ribosomal subunit protein uS8c (rps8) from Angiopteris evecta (Mule's foot fern).